Reading from the N-terminus, the 90-residue chain is Phosphocarrier protein NPr (90 aa).

Positions 2–90 (TQYRRVAIKN…ALFESGFDED (89 aa)) constitute an HPr domain. The active-site Pros-phosphohistidine intermediate is the H16.

The protein belongs to the HPr family.

Its subcellular location is the cytoplasm. Component of the phosphoenolpyruvate-dependent nitrogen-metabolic phosphotransferase system (nitrogen-metabolic PTS), that seems to be involved in regulating nitrogen metabolism. The phosphoryl group from phosphoenolpyruvate (PEP) is transferred to the phosphoryl carrier protein NPr by enzyme I-Ntr. Phospho-NPr then transfers it to EIIA-Ntr. Could function in the transcriptional regulation of sigma-54 dependent operons in conjunction with the NPr (PtsO) and EIIA-Ntr (PtsN) proteins. The polypeptide is Phosphocarrier protein NPr (ptsO) (Proteus mirabilis (strain HI4320)).